The primary structure comprises 840 residues: Phosphatidylglycerol lysyltransferase (840 aa).

The Cytoplasmic portion of the chain corresponds to 1 to 8 (MTQELKSK). The chain crosses the membrane as a helical span at residues 9 to 29 (LLSFFKFIFATALFIFVIFTL). Residues 30–52 (YRELSHINFKETFIQFGKINRLW) are Extracellular-facing. Residues 53-73 (LVLLFAGGGLSLILLSLYDII) form a helical membrane-spanning segment. Residues 74–89 (LVKALKLKMPLIRVFR) are Cytoplasmic-facing. Residues 90-110 (VSYIINALNSIIGFGGFIGAG) form a helical membrane-spanning segment. Over 111-129 (VRAFVYKNYTNDTKKLVQY) the chain is Extracellular. A helical transmembrane segment spans residues 130-150 (ISIILVSMLTGLSLLSILVVL). At 151-161 (RIFNASHMIDE) the chain is on the cytoplasmic side. Residues 162–182 (ISWVRWILYIVALFLPIFIFY) traverse the membrane as a helical segment. At 183–200 (TVARPVDRNNRYMGVYCT) the chain is on the extracellular side. Residues 201-221 (VVSCVEWMAAATVLYFAALIV) traverse the membrane as a helical segment. Residues 222-229 (DIHISFMT) are Cytoplasmic-facing. The chain crosses the membrane as a helical span at residues 230–250 (FVGIFVIAALSGLVSFIPGGF). The Extracellular portion of the chain corresponds to 251 to 270 (GAFDLVVLLGLKSLGISEEK). A helical transmembrane segment spans residues 271-291 (ILLALVLYRFAYYFVPVMIAL). Topologically, residues 292 to 337 (ILSSFEFGNTAKKYLDNSKYFIPVKDFTSFLRSYQKDILAKVPSFS) are cytoplasmic. A helical transmembrane segment spans residues 338–358 (LAILIFLTSIIFFINNLTIVY). At 359 to 366 (DGLYDGNH) the chain is on the extracellular side. The chain crosses the membrane as a helical span at residues 367–387 (FAYYIALAVQTSACLLLILNV). At 388-392 (RGIYK) the chain is on the cytoplasmic side. The helical transmembrane segment at 393–413 (GSRRAIIYAFISIILIASATI) threads the bilayer. Over 414–415 (YT) the chain is Extracellular. The helical transmembrane segment at 416–436 (YASFLLLSWLIIIFVLLILAY) threads the bilayer. The Cytoplasmic segment spans residues 437 to 450 (QRAQVLKRPLRFKK). A helical transmembrane segment spans residues 451–471 (LAVMLLLSIFILYLNHILISG). Over 472–489 (TLYALDVYHIEIDTSLLR) the chain is Extracellular. Residues 490-510 (YYFWMTIVIIMLLVGVIAWLF) form a helical membrane-spanning segment. Residues 511–840 (DYKYKCPHHS…LKVMRVIRHK (330 aa)) are Cytoplasmic-facing.

The protein belongs to the LPG synthase family.

It is found in the cell membrane. It carries out the reaction L-lysyl-tRNA(Lys) + a 1,2-diacyl-sn-glycero-3-phospho-(1'-sn-glycerol) = a 1,2-diacyl-sn-glycero-3-phospho-1'-(3'-O-L-lysyl)-sn-glycerol + tRNA(Lys). In terms of biological role, catalyzes the transfer of a lysyl group from L-lysyl-tRNA(Lys) to membrane-bound phosphatidylglycerol (PG), which produces lysylphosphatidylglycerol (LPG), a major component of the bacterial membrane with a positive net charge. LPG synthesis contributes to bacterial virulence as it is involved in the resistance mechanism against cationic antimicrobial peptides (CAMP) produces by the host's immune system (defensins, cathelicidins) and by the competing microorganisms (bacteriocins). In fact, the modification of anionic phosphatidylglycerol with positively charged L-lysine results in repulsion of the peptides. The sequence is that of Phosphatidylglycerol lysyltransferase (mprF) from Staphylococcus epidermidis (strain ATCC 12228 / FDA PCI 1200).